A 424-amino-acid chain; its full sequence is Glycerol-3-phosphate dehydrogenase [NAD(+)] (424 aa).

NAD(+)-binding positions include 79–84, Phe111, and Phe167; that span reads GSGNWG. Lys190 is a binding site for substrate. An NAD(+)-binding site is contributed by Ala223. Catalysis depends on Lys283, which acts as the Proton acceptor. 2 residues coordinate NAD(+): Arg348 and Gln377. 348 to 349 serves as a coordination point for substrate; the sequence is RN.

The protein belongs to the NAD-dependent glycerol-3-phosphate dehydrogenase family.

The enzyme catalyses sn-glycerol 3-phosphate + NAD(+) = dihydroxyacetone phosphate + NADH + H(+). This Eremothecium gossypii (strain ATCC 10895 / CBS 109.51 / FGSC 9923 / NRRL Y-1056) (Yeast) protein is Glycerol-3-phosphate dehydrogenase [NAD(+)] (GPD).